We begin with the raw amino-acid sequence, 229 residues long: Peptidase E (229 aa).

Residues S120, D135, and H157 each act as charge relay system in the active site.

This sequence belongs to the peptidase S51 family.

The protein localises to the cytoplasm. The enzyme catalyses Dipeptidase E catalyzes the hydrolysis of dipeptides Asp-|-Xaa. It does not act on peptides with N-terminal Glu, Asn or Gln, nor does it cleave isoaspartyl peptides.. Functionally, hydrolyzes dipeptides containing N-terminal aspartate residues. May play a role in allowing the cell to use peptide aspartate to spare carbon otherwise required for the synthesis of the aspartate family of amino acids. This Shigella boydii serotype 18 (strain CDC 3083-94 / BS512) protein is Peptidase E.